Reading from the N-terminus, the 339-residue chain is Tetraacyldisaccharide 4'-kinase (339 aa).

Residue 44–51 (TVGGTGKT) coordinates ATP.

The protein belongs to the LpxK family.

It carries out the reaction a lipid A disaccharide + ATP = a lipid IVA + ADP + H(+). The protein operates within glycolipid biosynthesis; lipid IV(A) biosynthesis; lipid IV(A) from (3R)-3-hydroxytetradecanoyl-[acyl-carrier-protein] and UDP-N-acetyl-alpha-D-glucosamine: step 6/6. Its function is as follows. Transfers the gamma-phosphate of ATP to the 4'-position of a tetraacyldisaccharide 1-phosphate intermediate (termed DS-1-P) to form tetraacyldisaccharide 1,4'-bis-phosphate (lipid IVA). This is Tetraacyldisaccharide 4'-kinase from Bdellovibrio bacteriovorus (strain ATCC 15356 / DSM 50701 / NCIMB 9529 / HD100).